We begin with the raw amino-acid sequence, 320 residues long: Probable 5-dehydro-4-deoxyglucarate dehydratase (320 aa).

Belongs to the DapA family.

It carries out the reaction 5-dehydro-4-deoxy-D-glucarate + H(+) = 2,5-dioxopentanoate + CO2 + H2O. Its pathway is carbohydrate acid metabolism; D-glucarate degradation; 2,5-dioxopentanoate from D-glucarate: step 2/2. This is Probable 5-dehydro-4-deoxyglucarate dehydratase from Streptomyces griseus subsp. griseus (strain JCM 4626 / CBS 651.72 / NBRC 13350 / KCC S-0626 / ISP 5235).